A 292-amino-acid chain; its full sequence is Probable 2-(5''-triphosphoribosyl)-3'-dephosphocoenzyme-A synthase (292 aa).

The protein belongs to the CitG/MdcB family.

The catalysed reaction is 3'-dephospho-CoA + ATP = 2'-(5''-triphospho-alpha-D-ribosyl)-3'-dephospho-CoA + adenine. Involved in the formation of 2-(5''-phosphoribosyl)-3'-dephosphocoenzyme-A, the prosthetic group of the acyl-carrier protein of the malonate decarboxylase. This is Probable 2-(5''-triphosphoribosyl)-3'-dephosphocoenzyme-A synthase from Azotobacter vinelandii (strain DJ / ATCC BAA-1303).